The chain runs to 620 residues: Lamin-B2 (620 aa).

The interval 1–38 (MSPPSPGRRREQRRPRAAATMATPLPGRAGGPATPLSP) is disordered. A head region spans residues 1 to 48 (MSPPSPGRRREQRRPRAAATMATPLPGRAGGPATPLSPTRLSRLQEKE). Phosphothreonine is present on residues threonine 23 and threonine 34. Serine 37 carries the post-translational modification Phosphoserine. Residues 46–402 (EKEELRELND…KLLEGEEERL (357 aa)) form the IF rod domain. Residues 49-83 (ELRELNDRLAHYIDRVRALELENDRLLLKISEKEE) form a coil 1A region. Residue lysine 77 forms a Glycyl lysine isopeptide (Lys-Gly) (interchain with G-Cter in SUMO2) linkage. Lysine 81 carries the post-translational modification N6-acetyllysine; alternate. Lysine 81 is covalently cross-linked (Glycyl lysine isopeptide (Lys-Gly) (interchain with G-Cter in SUMO2); alternate). Residues 84-95 (VTTREVSGIKAL) form a linker 1 region. The segment at 96-229 (YESELADARR…DFRKSVFEEE (134 aa)) is coil 1B. Glycyl lysine isopeptide (Lys-Gly) (interchain with G-Cter in SUMO2) cross-links involve residues lysine 195 and lysine 255. Residues 230–256 (VRETRRRHERRLVEVDSSRQQEYDFKM) are linker 2. Residues 257–400 (AQALEELRSQ…YRKLLEGEEE (144 aa)) form a coil 2 region. Residues serine 316 and serine 407 each carry the phosphoserine modification. The interval 399 to 464 (EERLKLSPSP…GTGGSGGFHL (66 aa)) is disordered. The segment at 401 to 620 (RLKLSPSPSS…RTTSRGCYVM (220 aa)) is tail. The span at 404–431 (LSPSPSSRVTVSRATSSSSGSLSATGRL) shows a compositional bias: low complexity. O-linked (GlcNAc) threonine glycosylation occurs at threonine 413. Residues serine 420, serine 422, serine 424, and serine 426 each carry the phosphoserine modification. At arginine 433 the chain carries Omega-N-methylarginine. The Nuclear localization signal signature appears at 435 to 440 (KRKRLE). Over residues 444–453 (PLGSGPSVLG) the composition is skewed to low complexity. The region spanning 462-579 (FHLAQQASAS…EEVAMRTVKK (118 aa)) is the LTD domain. Residue lysine 489 forms a Glycyl lysine isopeptide (Lys-Gly) (interchain with G-Cter in SUMO2) linkage. Residue serine 497 is modified to Phosphoserine. The disordered stretch occupies residues 581–620 (SVMRENENGEEEEEEAEFGEEDLFHQQGDPRTTSRGCYVM). The span at 588-601 (NGEEEEEEAEFGEE) shows a compositional bias: acidic residues. Polar residues predominate over residues 609-620 (DPRTTSRGCYVM). Cysteine 617 is subject to Cysteine methyl ester. Cysteine 617 carries S-farnesyl cysteine lipidation. The propeptide at 618–620 (YVM) is removed in mature form.

The protein belongs to the intermediate filament family. In terms of assembly, dimer. Lamin dimers then assemble into dimeric head-to-tail polymers. Ultimately, two head-to-tail polymers assemble laterally into a protofilament with a uniformly shaped rod of 3.5 nm in diameter. Interacts with TMEM43. B-type lamins undergo a series of modifications, such as farnesylation and phosphorylation. Increased phosphorylation of the lamins occurs before envelope disintegration and probably plays a role in regulating lamin associations. In terms of processing, phosphorylation plays a key role in lamin organization, subcellular localization and nuclear envelope disintegration. Phosphorylation by CDK1 at Ser-37 and Ser-407 at the onset of mitosis drives lamin disassembly and nuclear envelope breakdown.

The protein localises to the nucleus lamina. Lamins are intermediate filament proteins that assemble into a filamentous meshwork, and which constitute the major components of the nuclear lamina, a fibrous layer on the nucleoplasmic side of the inner nuclear membrane. Lamins provide a framework for the nuclear envelope, bridging the nuclear envelope and chromatin, thereby playing an important role in nuclear assembly, chromatin organization, nuclear membrane and telomere dynamics. The structural integrity of the lamina is strictly controlled by the cell cycle, as seen by the disintegration and formation of the nuclear envelope in prophase and telophase, respectively. This Homo sapiens (Human) protein is Lamin-B2 (LMNB2).